The chain runs to 425 residues: Nuclear hormone receptor family member nhr-13 (425 aa).

The segment at residues 5–83 is a DNA-binding region (nuclear receptor); that stretch reads PNSCEVCSSS…IGMKPLLVKS (79 aa). 2 consecutive NR C4-type zinc fingers follow at residues 11-30 and 46-71; these read CSSS…CKAC and CIDQ…LKKC. The interval 108–148 is disordered; it reads VKENSEEIQNDDDPQESDAEMENESTPGPSSEPSENVSAEN. The segment covering 113 to 130 has biased composition (acidic residues); it reads EEIQNDDDPQESDAEMEN. Over residues 131-142 the composition is skewed to low complexity; it reads ESTPGPSSEPSE. In terms of domain architecture, NR LBD spans 147-414; it reads ENQETVTKFL…KSMISLTSFW (268 aa).

Belongs to the nuclear hormone receptor family. In terms of assembly, may interact with nuclear hormone receptor nhr-49.

The protein resides in the nucleus. Orphan nuclear receptor. Involved in regulating fatty acid desaturase genes, acting in concert with nuclear hormone receptor nhr-49. This chain is Nuclear hormone receptor family member nhr-13 (nhr-13), found in Caenorhabditis elegans.